The chain runs to 133 residues: Ribosome-binding factor A (133 aa).

Belongs to the RbfA family. Monomer. Binds 30S ribosomal subunits, but not 50S ribosomal subunits or 70S ribosomes.

The protein localises to the cytoplasm. Functionally, one of several proteins that assist in the late maturation steps of the functional core of the 30S ribosomal subunit. Associates with free 30S ribosomal subunits (but not with 30S subunits that are part of 70S ribosomes or polysomes). Required for efficient processing of 16S rRNA. May interact with the 5'-terminal helix region of 16S rRNA. The protein is Ribosome-binding factor A of Psychromonas ingrahamii (strain DSM 17664 / CCUG 51855 / 37).